Reading from the N-terminus, the 360-residue chain is Magnesium transporter NIPA2 (360 aa).

At 1–9 (MSQGHGKYD) the chain is on the extracellular side. A helical membrane pass occupies residues 10-30 (FYIGLGLAMSSSIFIGGSFIL). Topologically, residues 31 to 56 (KKKGLLRLARKGSTRAGQGGHAYLKE) are cytoplasmic. The chain crosses the membrane as a helical span at residues 57–77 (WLWWAGLLSMGAGEVANFAAY). Ala-78 is a topological domain (extracellular). A helical transmembrane segment spans residues 79 to 99 (FAPATLVTPLGALSVLVSAIL). Over 100 to 107 (SSYFLNER) the chain is Cytoplasmic. The helical transmembrane segment at 108-128 (LNLHGKIGCLLSILGSTVMVI) threads the bilayer. The Extracellular segment spans residues 129-149 (HAPKEEEIETLNEMSHKLGDP). The helical transmembrane segment at 150-170 (GFVVFATLVVIVSLILIFVVG) threads the bilayer. Topologically, residues 171–175 (PRHGQ) are cytoplasmic. The helical transmembrane segment at 176–196 (TNILVYITICSVIGAVSVSCA) threads the bilayer. The Extracellular segment spans residues 197 to 215 (KGLGIAIKELFAGKPVLQH). Residues 216-236 (PLTWILLLSLIVCVSTQINYL) form a helical membrane-spanning segment. The Cytoplasmic segment spans residues 237–246 (NRALDIFNTS). The chain crosses the membrane as a helical span at residues 247 to 267 (IVTPIYYVFFTTSVITCSAIL). Over 268–278 (FKEWQDMPVDD) the chain is Extracellular. A helical transmembrane segment spans residues 279–299 (VIGTLSGFFTIIVGIFLLHAF). The Cytoplasmic portion of the chain corresponds to 300–360 (KDVSFSLSSL…SRRNGNLTAF (61 aa)).

Belongs to the NIPA family.

It is found in the cell membrane. The protein resides in the early endosome. It carries out the reaction Mg(2+)(in) = Mg(2+)(out). In terms of biological role, acts as a selective Mg(2+) transporter. This is Magnesium transporter NIPA2 (NIPA2) from Bos taurus (Bovine).